The following is a 129-amino-acid chain: Flagellar assembly factor FliW 2 (129 aa).

This sequence belongs to the FliW family. In terms of assembly, interacts with translational regulator CsrA and flagellin(s).

It is found in the cytoplasm. Functionally, acts as an anti-CsrA protein, binds CsrA and prevents it from repressing translation of its target genes, one of which is flagellin. Binds to flagellin and participates in the assembly of the flagellum. This is Flagellar assembly factor FliW 2 from Helicobacter pylori (strain HPAG1).